A 295-amino-acid chain; its full sequence is Iron-sulfur cluster carrier protein (295 aa).

38 to 45 (GKGGVGKS) lines the ATP pocket.

This sequence belongs to the Mrp/NBP35 ATP-binding proteins family. In terms of assembly, homodimer.

Functionally, binds and transfers iron-sulfur (Fe-S) clusters to target apoproteins. Can hydrolyze ATP. This is Iron-sulfur cluster carrier protein from Pyrococcus furiosus (strain ATCC 43587 / DSM 3638 / JCM 8422 / Vc1).